The sequence spans 117 residues: MEIAIIALFIVSIALIAFSYSQRDPMKDVEQELETLQLSAMQEIYKLKKKMTVLEEELLETNLVIRKSKQNDINQKIAKQILSKYNNGMSAEAIAKAEHVSVEDVNTIIKDNEKVLV.

Residues 1-21 (MEIAIIALFIVSIALIAFSYS) form a helical membrane-spanning segment. Positions 38-67 (LSAMQEIYKLKKKMTVLEEELLETNLVIRK) form a coiled coil.

The protein resides in the cell membrane. This is an uncharacterized protein from Bacillus subtilis (strain 168).